The sequence spans 65 residues: MPKIKTRRSAAKRFSVTGSGKFRRRKQNLRHILTKKSAKRKMNLGQSAIVDATNEKAVRRMMPYA.

Positions M1–A11 are enriched in basic residues. Residues M1–R25 are disordered.

The protein belongs to the bacterial ribosomal protein bL35 family.

In Nitratidesulfovibrio vulgaris (strain ATCC 29579 / DSM 644 / CCUG 34227 / NCIMB 8303 / VKM B-1760 / Hildenborough) (Desulfovibrio vulgaris), this protein is Large ribosomal subunit protein bL35.